We begin with the raw amino-acid sequence, 312 residues long: MFWQRKDLLGLRYLTPEEINLILDTAVPMKEIIGRKIKKTPTLRGRSMVTLFYENSTRTRSSFDLAGKFLSADTVGLTASSSSVAKGESLRDTGLTLTAMGVDVVVMRHPASGAAEYLAKCIPAAVINAGDGTHEHPTQALLDMFTIREKKGSMAGLKVVIVGDILHSRVARSNIWGLTKMGAEVRVVGPITLMPKDIEKMGVKVYHRLEDALEGADVVNVLRIQLERQQQGLFPSLREYSRLYGINQKRLELTASDAIILHPGPMNRGVEIEHQVAYGNRSFINEQVTNGVAVRMALLYLLTGGEYHALSN.

Residues Arg-58 and Thr-59 each coordinate carbamoyl phosphate. Position 86 (Lys-86) interacts with L-aspartate. Carbamoyl phosphate-binding residues include Arg-108, His-136, and Gln-139. L-aspartate contacts are provided by Arg-169 and Arg-223. Gly-264 and Pro-265 together coordinate carbamoyl phosphate.

This sequence belongs to the aspartate/ornithine carbamoyltransferase superfamily. ATCase family. Heterododecamer (2C3:3R2) of six catalytic PyrB chains organized as two trimers (C3), and six regulatory PyrI chains organized as three dimers (R2).

The enzyme catalyses carbamoyl phosphate + L-aspartate = N-carbamoyl-L-aspartate + phosphate + H(+). It participates in pyrimidine metabolism; UMP biosynthesis via de novo pathway; (S)-dihydroorotate from bicarbonate: step 2/3. In terms of biological role, catalyzes the condensation of carbamoyl phosphate and aspartate to form carbamoyl aspartate and inorganic phosphate, the committed step in the de novo pyrimidine nucleotide biosynthesis pathway. The sequence is that of Aspartate carbamoyltransferase catalytic subunit from Desulforamulus reducens (strain ATCC BAA-1160 / DSM 100696 / MI-1) (Desulfotomaculum reducens).